The following is a 201-amino-acid chain: Retinol-binding protein 4 (201 aa).

The signal sequence occupies residues 1-18 (MKWVWALLLLAALGSGRA). 3 disulfides stabilise this stretch: cysteine 22–cysteine 178, cysteine 88–cysteine 192, and cysteine 138–cysteine 147. Glutamine 116 provides a ligand contact to substrate. Arginine 139 is subject to Omega-N-methylarginine.

This sequence belongs to the calycin superfamily. Lipocalin family. Interacts with TTR. Interaction with TTR prevents its loss by filtration through the kidney glomeruli. Interacts with STRA6. In terms of tissue distribution, detected in blood plasma and in urine (at protein level).

The protein resides in the secreted. Its function is as follows. Retinol-binding protein that mediates retinol transport in blood plasma. Delivers retinol from the liver stores to the peripheral tissues. Transfers the bound all-trans retinol to STRA6, that then facilitates retinol transport across the cell membrane. The protein is Retinol-binding protein 4 (RBP4) of Homo sapiens (Human).